We begin with the raw amino-acid sequence, 149 residues long: 3-hydroxyacyl-[acyl-carrier-protein] dehydratase FabZ (149 aa).

His53 is a catalytic residue.

This sequence belongs to the thioester dehydratase family. FabZ subfamily.

Its subcellular location is the cytoplasm. It carries out the reaction a (3R)-hydroxyacyl-[ACP] = a (2E)-enoyl-[ACP] + H2O. Its function is as follows. Involved in unsaturated fatty acids biosynthesis. Catalyzes the dehydration of short chain beta-hydroxyacyl-ACPs and long chain saturated and unsaturated beta-hydroxyacyl-ACPs. The protein is 3-hydroxyacyl-[acyl-carrier-protein] dehydratase FabZ of Polynucleobacter necessarius subsp. necessarius (strain STIR1).